A 209-amino-acid chain; its full sequence is U1 small nuclear ribonucleoprotein C (209 aa).

A Matrin-type zinc finger spans residues 4 to 36 (HYCDYCDVFLTHDSASVRKAHNSGRNHLANVRD). Residues 72–87 (PQHLQAPPQGGFAPPM) are compositionally biased toward low complexity. The tract at residues 72–209 (PQHLQAPPQG…RARMMGPGGR (138 aa)) is disordered. Composition is skewed to pro residues over residues 93 to 150 (GGFP…PFPP) and 159 to 191 (PGAP…PTNP).

This sequence belongs to the U1 small nuclear ribonucleoprotein C family. As to quaternary structure, U1 snRNP is composed of the 7 core Sm proteins B/B', D1, D2, D3, E, F and G that assemble in a heptameric protein ring on the Sm site of the small nuclear RNA to form the core snRNP, and at least 3 U1 snRNP-specific proteins U1-70K, U1-A and U1-C. U1-C interacts with U1 snRNA and the 5' splice-site region of the pre-mRNA.

The protein resides in the nucleus. Its function is as follows. Component of the spliceosomal U1 snRNP, which is essential for recognition of the pre-mRNA 5' splice-site and the subsequent assembly of the spliceosome. U1-C is directly involved in initial 5' splice-site recognition for both constitutive and regulated alternative splicing. The interaction with the 5' splice-site seems to precede base-pairing between the pre-mRNA and the U1 snRNA. Stimulates commitment or early (E) complex formation by stabilizing the base pairing of the 5' end of the U1 snRNA and the 5' splice-site region. The polypeptide is U1 small nuclear ribonucleoprotein C (Coprinopsis cinerea (strain Okayama-7 / 130 / ATCC MYA-4618 / FGSC 9003) (Inky cap fungus)).